Here is a 277-residue protein sequence, read N- to C-terminus: Phosphoenolpyruvate synthase regulatory protein (277 aa).

157-164 is a binding site for ADP; that stretch reads GVSRCGKT.

It belongs to the pyruvate, phosphate/water dikinase regulatory protein family. PSRP subfamily.

It carries out the reaction [pyruvate, water dikinase] + ADP = [pyruvate, water dikinase]-phosphate + AMP + H(+). The catalysed reaction is [pyruvate, water dikinase]-phosphate + phosphate + H(+) = [pyruvate, water dikinase] + diphosphate. In terms of biological role, bifunctional serine/threonine kinase and phosphorylase involved in the regulation of the phosphoenolpyruvate synthase (PEPS) by catalyzing its phosphorylation/dephosphorylation. This Escherichia coli O1:K1 / APEC protein is Phosphoenolpyruvate synthase regulatory protein.